Here is a 245-residue protein sequence, read N- to C-terminus: Ribonuclease 3 (245 aa).

Positions 18 to 146 (LSKFLENLSI…FVGAIYLDSG (129 aa)) constitute an RNase III domain. Glutamate 59 lines the Mg(2+) pocket. Aspartate 63 is a catalytic residue. Mg(2+)-binding residues include aspartate 132 and glutamate 135. Residue glutamate 135 is part of the active site. The DRBM domain maps to 173–242 (DYKSLLQEYV…AEVALKAMEN (70 aa)).

Belongs to the ribonuclease III family. In terms of assembly, homodimer. Mg(2+) serves as cofactor.

The protein localises to the cytoplasm. The enzyme catalyses Endonucleolytic cleavage to 5'-phosphomonoester.. Functionally, digests double-stranded RNA. Involved in the processing of primary rRNA transcript to yield the immediate precursors to the large and small rRNAs (23S and 16S). Processes some mRNAs, and tRNAs when they are encoded in the rRNA operon. Processes pre-crRNA and tracrRNA of type II CRISPR loci if present in the organism. This chain is Ribonuclease 3, found in Borreliella burgdorferi (strain ATCC 35210 / DSM 4680 / CIP 102532 / B31) (Borrelia burgdorferi).